The primary structure comprises 62 residues: Alpha-conotoxin ViIA (62 aa).

The signal sequence occupies residues 1-18; the sequence is MGMRMMFVVFLLVVFASS. A propeptide spanning residues 19 to 45 is cleaved from the precursor; it reads VTLDRASYGRYASPVDRASALIAQAIL. 2 disulfides stabilise this stretch: cysteine 48/cysteine 54 and cysteine 49/cysteine 61.

This sequence belongs to the conotoxin A superfamily. In terms of processing, the toxin is inactive on the alpha-3-beta-2 nAChR when the disulfide bond connectivity is C1-C4 and C2-C3 (ViIA-I) (IC(50)&gt;10000 nM). As to expression, expressed by the venom duct.

The protein localises to the secreted. Functionally, alpha-conotoxins act on postsynaptic membranes, they bind to the nicotinic acetylcholine receptors (nAChR) and thus inhibit them. This toxin selectively inhibits nicotinic acetylcholine receptor (nAChR) alpha-3-beta-2 subtype (IC(50)=845.5 nM). This chain is Alpha-conotoxin ViIA, found in Conus virgo (Virgin cone).